Reading from the N-terminus, the 159-residue chain is Ribosomal RNA large subunit methyltransferase H (159 aa).

Leu-76 and Gly-108 together coordinate S-adenosyl-L-methionine.

It belongs to the RNA methyltransferase RlmH family. Homodimer.

Its subcellular location is the cytoplasm. It catalyses the reaction pseudouridine(1915) in 23S rRNA + S-adenosyl-L-methionine = N(3)-methylpseudouridine(1915) in 23S rRNA + S-adenosyl-L-homocysteine + H(+). Its function is as follows. Specifically methylates the pseudouridine at position 1915 (m3Psi1915) in 23S rRNA. The polypeptide is Ribosomal RNA large subunit methyltransferase H (Limosilactobacillus reuteri (strain DSM 20016) (Lactobacillus reuteri)).